Consider the following 325-residue polypeptide: Solute-binding protein RD1_1052 (325 aa).

The signal sequence occupies residues 1-26 (MRLFTKIKGLAAVTCVAALASSAAFA). Residues Glu75, 93 to 95 (GES), 148 to 151 (RGPR), Arg171, and Asn211 each bind D-mannonate. L-galactonate is bound by residues Glu75, 93–95 (GES), 148–151 (RGPR), Arg171, and Asn211.

Belongs to the bacterial solute-binding protein 7 family. In terms of assembly, the complex is comprised of an extracytoplasmic solute-binding protein and a heteromeric permease formed by two transmembrane proteins.

It is found in the periplasm. In terms of biological role, solute-binding protein that binds L-galactonate and D-mannonate (in vitro). Probably part of a tripartite ATP-independent periplasmic (TRAP) transport system that mediates solute transport into the cytoplasm. In Roseobacter denitrificans (strain ATCC 33942 / OCh 114) (Erythrobacter sp. (strain OCh 114)), this protein is Solute-binding protein RD1_1052.